We begin with the raw amino-acid sequence, 494 residues long: Glutamyl-tRNA(Gln) amidotransferase subunit A (494 aa).

Residues Lys88 and Ser163 each act as charge relay system in the active site. The Acyl-ester intermediate role is filled by Ser187.

It belongs to the amidase family. GatA subfamily. Heterotrimer of A, B and C subunits.

It catalyses the reaction L-glutamyl-tRNA(Gln) + L-glutamine + ATP + H2O = L-glutaminyl-tRNA(Gln) + L-glutamate + ADP + phosphate + H(+). Allows the formation of correctly charged Gln-tRNA(Gln) through the transamidation of misacylated Glu-tRNA(Gln) in organisms which lack glutaminyl-tRNA synthetase. The reaction takes place in the presence of glutamine and ATP through an activated gamma-phospho-Glu-tRNA(Gln). The protein is Glutamyl-tRNA(Gln) amidotransferase subunit A of Corynebacterium diphtheriae (strain ATCC 700971 / NCTC 13129 / Biotype gravis).